The following is a 452-amino-acid chain: Cobyrinate a,c-diamide synthase (452 aa).

In terms of domain architecture, GATase cobBQ-type spans 244–429 (RIAVARDRAF…LHLHWGTQAW (186 aa)). Catalysis depends on Cys325, which acts as the Nucleophile.

The protein belongs to the CobB/CbiA family. It depends on Mg(2+) as a cofactor.

The catalysed reaction is cob(II)yrinate + 2 L-glutamine + 2 ATP + 2 H2O = cob(II)yrinate a,c diamide + 2 L-glutamate + 2 ADP + 2 phosphate + 2 H(+). It functions in the pathway cofactor biosynthesis; adenosylcobalamin biosynthesis; cob(II)yrinate a,c-diamide from sirohydrochlorin (anaerobic route): step 10/10. Functionally, catalyzes the ATP-dependent amidation of the two carboxylate groups at positions a and c of cobyrinate, using either L-glutamine or ammonia as the nitrogen source. In Gloeobacter violaceus (strain ATCC 29082 / PCC 7421), this protein is Cobyrinate a,c-diamide synthase.